The chain runs to 413 residues: Arginine biosynthesis bifunctional protein ArgJ, mitochondrial (413 aa).

T168, K194, T205, and E292 together coordinate substrate. The active-site Nucleophile is the T205.

It belongs to the ArgJ family. In terms of assembly, heterodimer of an alpha and a beta chain. The alpha and beta chains are autoproteolytically processed from a single precursor protein within the mitochondrion.

The protein resides in the mitochondrion matrix. The catalysed reaction is N(2)-acetyl-L-ornithine + L-glutamate = N-acetyl-L-glutamate + L-ornithine. It carries out the reaction L-glutamate + acetyl-CoA = N-acetyl-L-glutamate + CoA + H(+). It participates in amino-acid biosynthesis; L-arginine biosynthesis; L-ornithine and N-acetyl-L-glutamate from L-glutamate and N(2)-acetyl-L-ornithine (cyclic): step 1/1. It functions in the pathway amino-acid biosynthesis; L-arginine biosynthesis; N(2)-acetyl-L-ornithine from L-glutamate: step 1/4. Catalyzes two activities which are involved in the cyclic version of arginine biosynthesis: the synthesis of acetylglutamate from glutamate and acetyl-CoA, and of ornithine by transacetylation between acetylornithine and glutamate. This is Arginine biosynthesis bifunctional protein ArgJ, mitochondrial from Clavispora lusitaniae (strain ATCC 42720) (Yeast).